Here is a 246-residue protein sequence, read N- to C-terminus: Putative carboxymethylenebutenolidase (246 aa).

Residues Cys-127, Asp-183, and His-215 contribute to the active site.

This sequence belongs to the dienelactone hydrolase family.

It carries out the reaction 2-(5-oxo-2,5-dihydrofuran-2-ylidene)acetate + H2O = 4-oxohex-2-enedioate + H(+). The sequence is that of Putative carboxymethylenebutenolidase from Synechocystis sp. (strain ATCC 27184 / PCC 6803 / Kazusa).